Consider the following 226-residue polypeptide: Agamous-like MADS-box protein AP3 (226 aa).

Positions 1–61 constitute an MADS-box domain; the sequence is MARGKIEIKR…GKLHEYISPS (61 aa). The region spanning 84–174 is the K-box domain; the sequence is YERMQENLKK…LHEFDARDRD (91 aa).

Expressed during flower development in stamens and petals.

Its subcellular location is the nucleus. Functionally, probable transcription factor involved in flower development. The polypeptide is Agamous-like MADS-box protein AP3 (Vitis vinifera (Grape)).